Here is a 210-residue protein sequence, read N- to C-terminus: Transposable element activator uncharacterized 23 kDa protein (210 aa).

Positions 67-78 are enriched in basic and acidic residues; sequence SGRMGGPRRDGR. The interval 67 to 87 is disordered; sequence SGRMGGPRRDGRVASSGVEGG.

This Zea mays (Maize) protein is Transposable element activator uncharacterized 23 kDa protein.